The sequence spans 49 residues: Small, acid-soluble spore protein O (49 aa).

A disordered region spans residues 1 to 49 (MGKRKANHTISGMNVASAQGQGTGYNEEFANEPLTPAERQNNKKRKKNQ). The segment covering 8-20 (HTISGMNVASAQG) has biased composition (polar residues).

This sequence belongs to the SspO family.

It is found in the spore core. The sequence is that of Small, acid-soluble spore protein O from Bacillus cereus (strain G9842).